Here is an 848-residue protein sequence, read N- to C-terminus: Beta-galactosidase 11 (848 aa).

A signal peptide spans 1 to 23 (MSAAAVLAVVAAAVAALAAAASG). N29 carries N-linked (GlcNAc...) asparagine glycosylation. The active-site Proton donor is E189. E260 functions as the Nucleophile in the catalytic mechanism. N261, N472, and N783 each carry an N-linked (GlcNAc...) asparagine glycan. The SUEL-type lectin domain maps to 750 to 837 (GGLKPTAVLS…GTLAVQAKCS (88 aa)).

The protein belongs to the glycosyl hydrolase 35 family.

It localises to the secreted. The protein localises to the extracellular space. The protein resides in the apoplast. The catalysed reaction is Hydrolysis of terminal non-reducing beta-D-galactose residues in beta-D-galactosides.. This chain is Beta-galactosidase 11, found in Oryza sativa subsp. japonica (Rice).